The following is a 314-amino-acid chain: Diisopropyl-fluorophosphatase (314 aa).

Glutamate 21, asparagine 120, asparagine 175, aspartate 229, aspartate 232, leucine 273, and histidine 274 together coordinate Ca(2+). Histidine 287 (proton acceptor) is an active-site residue.

As to quaternary structure, monomer. Ca(2+) serves as cofactor.

It catalyses the reaction diisopropyl fluorophosphate + H2O = diisopropyl phosphate + fluoride + 2 H(+). With respect to regulation, inhibited by chelating agents. Biological function and substrate unknown. However, it is capable of acting on phosphorus anhydride bonds (such as phosphorus-halide and phosphorus-cyanide) in organophosphorus compounds (including nerve gases). This chain is Diisopropyl-fluorophosphatase, found in Loligo vulgaris (Common European squid).